Reading from the N-terminus, the 512-residue chain is Intermediate filament family orphan 2 (512 aa).

An IF rod domain is found at 50-479; the sequence is NIHLLKGLNV…RLIKGSADRN (430 aa). Residues 473–512 are disordered; sequence KGSADRNSPSPSSVASSDSGSTDEIQEDLEREADVEPMVS. Low complexity predominate over residues 480 to 492; sequence SPSPSSVASSDSG. Residues 496 to 512 show a composition bias toward acidic residues; it reads EIQEDLEREADVEPMVS.

The protein belongs to the intermediate filament family.

The protein is Intermediate filament family orphan 2 (Iffo2) of Mus musculus (Mouse).